The following is a 33-amino-acid chain: Nigrocin-1 (33 aa).

The cysteines at positions 27 and 33 are disulfide-linked.

It belongs to the frog skin active peptide (FSAP) family. Brevinin subfamily. As to expression, expressed by the skin dorsal glands.

It localises to the secreted. In terms of biological role, shows antibacterial activity against both Gram-positive and Gram-negative bacteria and against the fungus C.albicans. Has no hemolytic activity. The chain is Nigrocin-1 from Pelophylax nigromaculatus (Black-spotted frog).